A 325-amino-acid chain; its full sequence is Polyamine aminopropyltransferase (325 aa).

One can recognise a PABS domain in the interval 11–248 (SSMAEDFAVE…TLWAMAMASD (238 aa)). S-methyl-5'-thioadenosine is bound at residue Q44. Spermidine-binding residues include H75 and D99. S-methyl-5'-thioadenosine-binding positions include E119 and 151 to 152 (DG). D169 functions as the Proton acceptor in the catalytic mechanism. Residue P176 participates in S-methyl-5'-thioadenosine binding.

This sequence belongs to the spermidine/spermine synthase family. As to quaternary structure, homodimer or homotetramer.

The protein resides in the cytoplasm. It catalyses the reaction S-adenosyl 3-(methylsulfanyl)propylamine + putrescine = S-methyl-5'-thioadenosine + spermidine + H(+). It participates in amine and polyamine biosynthesis; spermidine biosynthesis; spermidine from putrescine: step 1/1. Catalyzes the irreversible transfer of a propylamine group from the amino donor S-adenosylmethioninamine (decarboxy-AdoMet) to putrescine (1,4-diaminobutane) to yield spermidine. The chain is Polyamine aminopropyltransferase from Nitrosomonas europaea (strain ATCC 19718 / CIP 103999 / KCTC 2705 / NBRC 14298).